The chain runs to 296 residues: 4-hydroxy-tetrahydrodipicolinate synthase (296 aa).

A pyruvate-binding site is contributed by Thr47. Residue Tyr135 is the Proton donor/acceptor of the active site. Lys164 (schiff-base intermediate with substrate) is an active-site residue. Pyruvate is bound at residue Ile207.

This sequence belongs to the DapA family. Homotetramer; dimer of dimers.

It is found in the cytoplasm. It catalyses the reaction L-aspartate 4-semialdehyde + pyruvate = (2S,4S)-4-hydroxy-2,3,4,5-tetrahydrodipicolinate + H2O + H(+). It participates in amino-acid biosynthesis; L-lysine biosynthesis via DAP pathway; (S)-tetrahydrodipicolinate from L-aspartate: step 3/4. Catalyzes the condensation of (S)-aspartate-beta-semialdehyde [(S)-ASA] and pyruvate to 4-hydroxy-tetrahydrodipicolinate (HTPA). The chain is 4-hydroxy-tetrahydrodipicolinate synthase from Karelsulcia muelleri (strain GWSS) (Sulcia muelleri).